The sequence spans 2410 residues: Coprinoferrin synthetase (2410 aa).

The tract at residues 237–646 (LERRAKTNPH…GRIDTQIKVR (410 aa)) is adenylation 1. Residues 783–860 (RDCTPLEAEV…DIAQLVHVST (78 aa)) form the Carrier 1 domain. Ser820 carries the O-(pantetheine 4'-phosphoryl)serine modification. A condensation 1 region spans residues 891–1260 (DILPPFPVQE…SVEAVVNVHD (370 aa)). The disordered stretch occupies residues 1298 to 1317 (ELPLPSRRSPEPVRKVNDDE). Residues 1305 to 1314 (RSPEPVRKVN) show a composition bias toward basic and acidic residues. In terms of domain architecture, Carrier 2 spans 1324 to 1400 (LLDPVVVADL…RLARVVSNNK (77 aa)). An O-(pantetheine 4'-phosphoryl)serine modification is found at Ser1361. The tract at residues 1436–1839 (IIPSTALQSG…RIGRTFSVPS (404 aa)) is condensation 2. The Carrier 3 domain maps to 1858-1932 (VQAGIIHPVL…DLVLQATEIK (75 aa)). Residue Ser1893 is modified to O-(pantetheine 4'-phosphoryl)serine. Residues 1992–2315 (FQYLFTFKLP…TPIFNVNVNV (324 aa)) form a condensation 3 region.

This sequence belongs to the NRP synthetase family.

Its pathway is siderophore biosynthesis. In terms of biological role, nonribosomal peptide synthase; part of the gene cluster that mediates the biosynthesis of coprinoferrin, an acylated tripeptide hydroxamate siderophore. The biosynthesis of coprinoferrin depends on the hydroxylation of ornithine to N(5)-hydroxyornithine, catalyzed by the monooxygenase cpf2. The second step, the acylation of N(5)-hydroxy-L-ornithine to yield N(5)-hexanoyl-N(5)-hydroxyl-L-ornithine is catalyzed by a not yet identified acyltransferase. Finally, assembly of coprinoferrin is catalyzed by the nonribosomal peptide synthase (NRPS) cpf1 via amide bond formation between three N(5)-hexanoyl-N(5)-hydroxyl-L-ornithine molecules to release the linear trimer. Interestingly, proteins seemingly not directly related to biosynthesis, such as transcription factors, replication factors, and autophagy-related proteins, are conserved among the clusters homologous to the coprinoferrin cluster, suggesting that the cluster may also play developmental and cell biological functions. The chain is Coprinoferrin synthetase from Coprinopsis cinerea (strain Okayama-7 / 130 / ATCC MYA-4618 / FGSC 9003) (Inky cap fungus).